Consider the following 108-residue polypeptide: Ig kappa chain V-V region EPC 109 (108 aa).

A framework-1 region spans residues 1–23 (DVQMIQSPSSLSASLGDIVTMTC). Cys23 and Cys88 are disulfide-bonded. Positions 24-34 (QASQGTNINLN) are complementarity-determining-1. The interval 35–49 (WFQQKPGKAPKLLIY) is framework-2. Residues 50-56 (GASILEA) are complementarity-determining-2. Residues 57-88 (GVPSRFSGRRYGTDFTLTISSLEDEDMATYFC) form a framework-3 region. A complementarity-determining-3 region spans residues 89–97 (LQHSYLPYT). The tract at residues 98–108 (FGGGTKLEKKR) is framework-4.

This chain is Ig kappa chain V-V region EPC 109, found in Mus musculus (Mouse).